The chain runs to 1237 residues: uncharacterized protein (1237 aa).

Residues 591 to 712 (KDMLEIYSDL…IVLSKYTQWT (122 aa)) enclose the MHD1 domain. The C2 domain maps to 786–906 (LIEALDVAES…GDYLPREEWF (121 aa)). In terms of domain architecture, MHD2 spans 1014–1130 (EAAIYELLDY…KPTDFLLQEC (117 aa)).

This is an uncharacterized protein from Schizosaccharomyces pombe (strain 972 / ATCC 24843) (Fission yeast).